The primary structure comprises 765 residues: 5-methyltetrahydropteroyltriglutamate--homocysteine methyltransferase 2 (765 aa).

Lysine 18 and asparagine 116 together coordinate 5-methyltetrahydropteroyltri-L-glutamate. L-homocysteine is bound by residues 437–439 (IGS) and glutamate 490. Residues 437-439 (IGS) and glutamate 490 each bind L-methionine. 5-methyltetrahydropteroyltri-L-glutamate is bound by residues aspartate 495, tyrosine 518, 521–522 (RC), and tryptophan 567. Residue aspartate 605 participates in L-homocysteine binding. Aspartate 605 contributes to the L-methionine binding site. Positions 647, 649, 658, 662, and 671 each coordinate Zn(2+). The active-site Proton donor is histidine 701. Position 733 (cysteine 733) interacts with Zn(2+).

The protein belongs to the vitamin-B12 independent methionine synthase family. Requires Zn(2+) as cofactor. In terms of tissue distribution, expressed in leaves, stems and siliques.

It localises to the cytoplasm. It is found in the cytosol. The enzyme catalyses 5-methyltetrahydropteroyltri-L-glutamate + L-homocysteine = tetrahydropteroyltri-L-glutamate + L-methionine. It functions in the pathway amino-acid biosynthesis; L-methionine biosynthesis via de novo pathway; L-methionine from L-homocysteine (MetE route): step 1/1. Its function is as follows. Catalyzes the transfer of a methyl group from 5-methyltetrahydrofolate to homocysteine resulting in methionine formation. The polypeptide is 5-methyltetrahydropteroyltriglutamate--homocysteine methyltransferase 2 (MS2) (Arabidopsis thaliana (Mouse-ear cress)).